Reading from the N-terminus, the 201-residue chain is Lymphocyte antigen 6 complex locus protein G5b (201 aa).

Residues M1–G18 form the signal peptide. The region spanning R26–E118 is the UPAR/Ly6 domain. 5 cysteine pairs are disulfide-bonded: C28/C55, C31/C40, C47/C73, C81/C98, and C99/C104. N-linked (GlcNAc...) asparagine glycans are attached at residues N141 and N183.

As to quaternary structure, forms oligomer. In terms of processing, N-glycosylated.

The protein resides in the secreted. The protein is Lymphocyte antigen 6 complex locus protein G5b (LY6G5B) of Homo sapiens (Human).